We begin with the raw amino-acid sequence, 233 residues long: Large ribosomal subunit protein uL1 (233 aa).

Belongs to the universal ribosomal protein uL1 family. In terms of assembly, part of the 50S ribosomal subunit.

Binds directly to 23S rRNA. The L1 stalk is quite mobile in the ribosome, and is involved in E site tRNA release. Functionally, protein L1 is also a translational repressor protein, it controls the translation of the L11 operon by binding to its mRNA. The sequence is that of Large ribosomal subunit protein uL1 from Brucella anthropi (strain ATCC 49188 / DSM 6882 / CCUG 24695 / JCM 21032 / LMG 3331 / NBRC 15819 / NCTC 12168 / Alc 37) (Ochrobactrum anthropi).